The sequence spans 178 residues: Cytidylate kinase (178 aa).

Position 7-15 (7-15 (GLPGTGTTT)) interacts with ATP.

Belongs to the cytidylate kinase family. Type 2 subfamily.

The protein resides in the cytoplasm. The catalysed reaction is CMP + ATP = CDP + ADP. The enzyme catalyses dCMP + ATP = dCDP + ADP. The protein is Cytidylate kinase of Methanococcus maripaludis (strain DSM 14266 / JCM 13030 / NBRC 101832 / S2 / LL).